The primary structure comprises 78 residues: Acyl carrier protein (78 aa).

The Carrier domain occupies 1-76; it reads MALFEDIQAV…DVVKYIEDNK (76 aa). Ser-36 bears the O-(pantetheine 4'-phosphoryl)serine mark.

Belongs to the acyl carrier protein (ACP) family. In terms of processing, 4'-phosphopantetheine is transferred from CoA to a specific serine of apo-ACP by AcpS. This modification is essential for activity because fatty acids are bound in thioester linkage to the sulfhydryl of the prosthetic group.

It localises to the cytoplasm. Its pathway is lipid metabolism; fatty acid biosynthesis. Functionally, carrier of the growing fatty acid chain in fatty acid biosynthesis. The chain is Acyl carrier protein from Helicobacter pylori (strain J99 / ATCC 700824) (Campylobacter pylori J99).